A 101-amino-acid chain; its full sequence is ATP-dependent Clp protease adapter protein ClpS (101 aa).

This sequence belongs to the ClpS family. Binds to the N-terminal domain of the chaperone ClpA.

Its function is as follows. Involved in the modulation of the specificity of the ClpAP-mediated ATP-dependent protein degradation. This chain is ATP-dependent Clp protease adapter protein ClpS, found in Clostridium acetobutylicum (strain ATCC 824 / DSM 792 / JCM 1419 / IAM 19013 / LMG 5710 / NBRC 13948 / NRRL B-527 / VKM B-1787 / 2291 / W).